Here is an 899-residue protein sequence, read N- to C-terminus: MLNSHNTNHNNNSASNSNYNKGHKMHLKSATAKATIMKHKLSKFYGYGWMQVFLLLTVLVIGNQSAWQENIRPKLYVELGPEDVLKFVGNESVVDHFKLVTKDGNSLLIGARNTVFNLSIHDLVEQQRLVWTSPEDDTKMCLVKGKDEEACQNYIRIMVVPSPGRLFVCGTNSFRPMCNTYIISDSNYTLEATKNGQAVCPYDPRHNSTSVLADNELYSGTVADFSGSDPIIYREPLQTEQYDSLSLNAPNFVSSFTQGDFVYFFFRETAVEFINCGKAIYSRVARVCKWDKGGPHRFRNRWTSFLKSRLNCSIPGDYPFYFNEIQSASNLVEGQYGSMSSKLIYGVFNTPSNSIPGSAVCAFALQDIADTFEGQFKEQTGINSNWLPVNNAKVPDPRPGSCHNDSRALPDPTLNFIKTHSLMDENVPAFFSQPILVRTSTIYRFTQIAVDAQIKTPGGKTYDVIFVGTDHGKIIKSVNAESADSADKVTSVVIEEIDVLTKSEPIRNLEIVRTMQYDQPKDGSYDDGKLIIVTDSQVVAIQLHRCHNDKITSCSECVALQDPYCAWDKIAGKCRSHGAPRWLEENYFYQNVATGQHAACPSGKINSKDANAGEQKGFRNDMDLLDSRRQSKDQEIIDNIDKNFEDIINAQYTVETLVMAVLAGSIFSLLVGFFTGYFCGRRCHKDEDDNLPYPDTEYEYFEQRQNVNSFPSSCRIQQEPKLLPQVEEVTYAEPVLLPQPPPPNKMHSPKNTLRKPPMHQMHQGPNSETLFQFQPDGYNTQQSYRGRDNFGTLRSHQVMGDNYRRGDGFSTTRSVKKAVNNTNTRNRSLGRARRQPPRHGIVTQHRSNSPQQQQQQSQQPHSSSGSSPVMSNSSSSPAPPSSSPSPQESPKNCSYIYRD.

Residues 1-20 show a composition bias toward low complexity; sequence MLNSHNTNHNNNSASNSNYN. Residues 1–24 are disordered; it reads MLNSHNTNHNNNSASNSNYNKGHK. Over 1–40 the chain is Cytoplasmic; the sequence is MLNSHNTNHNNNSASNSNYNKGHKMHLKSATAKATIMKHK. Residues 41 to 61 traverse the membrane as a helical segment; it reads LSKFYGYGWMQVFLLLTVLVI. The Extracellular portion of the chain corresponds to 62 to 657; the sequence is GNQSAWQENI…INAQYTVETL (596 aa). 3 N-linked (GlcNAc...) asparagine glycosylation sites follow: asparagine 63, asparagine 90, and asparagine 117. A Sema domain is found at 74–543; sequence KLYVELGPED…TDSQVVAIQL (470 aa). 2 cysteine pairs are disulfide-bonded: cysteine 141–cysteine 151 and cysteine 169–cysteine 178. N-linked (GlcNAc...) asparagine glycans are attached at residues asparagine 187, asparagine 207, and asparagine 311. 2 cysteine pairs are disulfide-bonded: cysteine 288–cysteine 402 and cysteine 312–cysteine 361. N-linked (GlcNAc...) asparagine glycosylation is present at asparagine 404. Residues 658–678 traverse the membrane as a helical segment; that stretch reads VMAVLAGSIFSLLVGFFTGYF. Residues 679-899 are Cytoplasmic-facing; it reads CGRRCHKDED…PKNCSYIYRD (221 aa). Disordered stretches follow at residues 735–766 and 798–899; these read VLLP…QGPN and VMGD…IYRD. A compositionally biased stretch (polar residues) spans 809–827; that stretch reads FSTTRSVKKAVNNTNTRNR. Positions 828–837 are enriched in basic residues; sequence SLGRARRQPP. Residues 847–876 show a composition bias toward low complexity; sequence SNSPQQQQQQSQQPHSSSGSSPVMSNSSSS.

The protein belongs to the semaphorin family. As to expression, expressed by subsets of neurons and muscles.

The protein localises to the cell membrane. In terms of biological role, involved in growth cone guidance through its role in axonal repulsion. Function in neurons is essential for adult survival, motor neuron survival, and is important for climbing behavior and activity. The polypeptide is Semaphorin-1A (Drosophila melanogaster (Fruit fly)).